A 638-amino-acid chain; its full sequence is 3D-(3,5/4)-trihydroxycyclohexane-1,2-dione hydrolase (638 aa).

Glutamate 67 is a thiamine diphosphate binding site. Positions 442–523 (SLPGDLQRLW…INIMLFDNSG (82 aa)) are thiamine pyrophosphate binding. Mg(2+) contacts are provided by aspartate 494 and asparagine 521.

This sequence belongs to the TPP enzyme family. It depends on Mg(2+) as a cofactor. Thiamine diphosphate is required as a cofactor.

It carries out the reaction 3D-3,5/4-trihydroxycyclohexane-1,2-dione + H2O = 5-deoxy-D-glucuronate + H(+). It participates in polyol metabolism; myo-inositol degradation into acetyl-CoA; acetyl-CoA from myo-inositol: step 3/7. In terms of biological role, involved in the cleavage of the C1-C2 bond of 3D-(3,5/4)-trihydroxycyclohexane-1,2-dione (THcHDO) to yield 5-deoxy-glucuronate (5DG). The protein is 3D-(3,5/4)-trihydroxycyclohexane-1,2-dione hydrolase of Listeria innocua serovar 6a (strain ATCC BAA-680 / CLIP 11262).